We begin with the raw amino-acid sequence, 473 residues long: Glutamate--tRNA ligase (473 aa).

Residues 10–20 (PSPTGYLHLGN) carry the 'HIGH' region motif. Positions 98, 100, 125, and 127 each coordinate Zn(2+). The 'KMSKS' region signature appears at 242–246 (KLSKR). Lys245 is a binding site for ATP.

It belongs to the class-I aminoacyl-tRNA synthetase family. Glutamate--tRNA ligase type 1 subfamily. As to quaternary structure, monomer. Requires Zn(2+) as cofactor.

It is found in the cytoplasm. It catalyses the reaction tRNA(Glu) + L-glutamate + ATP = L-glutamyl-tRNA(Glu) + AMP + diphosphate. Its function is as follows. Catalyzes the attachment of glutamate to tRNA(Glu) in a two-step reaction: glutamate is first activated by ATP to form Glu-AMP and then transferred to the acceptor end of tRNA(Glu). This is Glutamate--tRNA ligase from Aquifex aeolicus (strain VF5).